The sequence spans 1303 residues: MATPEKWRKYLEDYIPCSFPTFLDNEGADSKSFASVLVRLEHPYGRLMSFSNNCGVDVAVVLNVAWGIVLQAYTGQDATCFAVIAESNLNIRPCRIRFTSDKVVSDILSACQSPCGEKTGDHDIPASHLSQDGGFLASEFFNTCIWGPMQGSQMPSETQAADMNRNALNLFDLVTRVEVDKSITRITLTYKRGLMREHQALAVAKAMERAISEIISGKERLDQFCLLTSEDRRQMSLWNMNLSDNSDARIETLIHEWCRWTPSAVAVCGWDGDFSYKELNELSTGVKHDLRHLGIGPEVFVPILFEKSRWAVIAMLGVMKAGGAFILLDPAHPPKRLRSICDKVSARLVVSSVQQADLAAGLAGHVVIVGGEVATAGMAQHVGEHDDSMDCIAAPHNALYAVFTSGSTGTPKGVVNSHSSFLAAMPVYLKALELDNNSRVFQFASYAFDVTIFDALMTLVAGGCVCVPSNADRSSDLTSAIQHFGTTHLSVTPTVARILDPQDFPSLKTIVLGGELSASDELLKWVNNVRVIRLYGASECTVMSIQCTSGPASSIKTINYETGNCCWVVNPQNHEQLRPLGAVGELLVEGAVVGRGYLDDASQTSETFIEAPAWLQELRQGSSTVYKSGDLVRIAADKSVQFVCRKSTQVKLRGQRIELGEVEHHVRLAIPSATECVVELITNPDASRPPMLMAFVLSDTDASTSSITARRNATSDAVFAEPSASFRSQIASITSKLRDALPSYMVPSVILPLRIMPLTSTDKINRKLLGQLAAALSREDLQLYQAQQTTYRAPSNDIEEAFQRFFAQVLGLSLDQIGADDHFFSLGGDSLTAMRLAAMARKAKFDLTVQNVFDHPELSELARHTKLVADESQEFPPPFTLVAGSKQGIVRDAARQCRLPSRVIEDVYPCTPLQKGLLAETMRDAAAFVAKIEVPLPRDVDLDRLRHAWAAVAKANPILRTRMIFSPSYGMLQVVVREDIPWIESDDVESQELVAVGRSLVQLILRRRPSTALFLHIHHAVYDGYSLPLMFAQLNNAYHGETLAFRPASAFIRYLATMPDATDYWQSMCQGLESPSFPALPHSSHRPHPDSKATHTVCVASPQAREYTPNTHVRLAWAITQAHEQGLLDVFYGTVVSGRNAPVDQIESMLIPTVATVPCRISLDVDSPVRKILHRIQDVATRGIPFEQIGLAEISHLGKDAAHACSFQTLLLMQPTAVEQNENDFFNTSTSDANYRADATYAINLFCTLENQDLSVTALYDGNIVSTDTMQRLLQNLGKSMQEIHAAPRTLIGDILKSLHSRL.

The tract at residues 256 to 653 (EWCRWTPSAV…CRKSTQVKLR (398 aa)) is adenylation (A) domain. The 77-residue stretch at 793–869 (APSNDIEEAF…ELARHTKLVA (77 aa)) folds into the Carrier domain. Ser830 is modified (O-(pantetheine 4'-phosphoryl)serine). Positions 905-1294 (EDVYPCTPLQ…HAAPRTLIGD (390 aa)) are condensation (C) domain.

It belongs to the NRP synthetase family.

It functions in the pathway alkaloid biosynthesis; ergot alkaloid biosynthesis. D-lysergyl-peptide-synthetase subunit 2; part of the gene cluster that mediates the biosynthesis of fungal ergot alkaloid. DmaW catalyzes the first step of ergot alkaloid biosynthesis by condensing dimethylallyl diphosphate (DMAP) and tryptophan to form 4-dimethylallyl-L-tryptophan. The second step is catalyzed by the methyltransferase easF that methylates 4-dimethylallyl-L-tryptophan in the presence of S-adenosyl-L-methionine, resulting in the formation of 4-dimethylallyl-L-abrine. The catalase easC and the FAD-dependent oxidoreductase easE then transform 4-dimethylallyl-L-abrine to chanoclavine-I which is further oxidized by easD in the presence of NAD(+), resulting in the formation of chanoclavine-I aldehyde. Agroclavine dehydrogenase easG then mediates the conversion of chanoclavine-I aldehyde to agroclavine via a non-enzymatic adduct reaction: the substrate is an iminium intermediate that is formed spontaneously from chanoclavine-I aldehyde in the presence of glutathione. The presence of easA is not required to complete this reaction. Further conversion of agroclavine to paspalic acid is a two-step process involving oxidation of agroclavine to elymoclavine and of elymoclavine to paspalic acid, the second step being performed by the elymoclavine oxidase cloA. Paspalic acid is then further converted to D-lysergic acid. Ergopeptines are assembled from D-lysergic acid and three different amino acids by the D-lysergyl-peptide-synthetases composed each of a monomudular and a trimodular nonribosomal peptide synthetase subunit. LpsB and lpsC encode the monomodular subunits responsible for D-lysergic acid activation and incorporation into the ergopeptine backbone. LpsA1 and A2 subunits encode the trimodular nonribosomal peptide synthetase assembling the tripeptide portion of ergopeptines. LpsA1 is responsible for formation of the major ergopeptine, ergotamine, and lpsA2 for alpha-ergocryptine, the minor ergopeptine of the total alkaloid mixture elaborated by C.purpurea. D-lysergyl-tripeptides are assembled by the nonribosomal peptide synthetases and released as N-(D-lysergyl-aminoacyl)-lactams. Cyclolization of the D-lysergyl-tripeptides is performed by the Fe(2+)/2-ketoglutarate-dependent dioxygenase easH which introduces a hydroxyl group into N-(D-lysergyl-aminoacyl)-lactam at alpha-C of the aminoacyl residue followed by spontaneous condensation with the terminal lactam carbonyl group. This chain is D-lysergyl-peptide-synthetase subunit 2, found in Claviceps purpurea (strain 20.1) (Ergot fungus).